Here is a 101-residue protein sequence, read N- to C-terminus: Small ribosomal subunit protein bS18c (101 aa).

The protein belongs to the bacterial ribosomal protein bS18 family. As to quaternary structure, part of the 30S ribosomal subunit.

Its subcellular location is the plastid. The protein localises to the chloroplast. The protein is Small ribosomal subunit protein bS18c of Eucalyptus globulus subsp. globulus (Tasmanian blue gum).